The chain runs to 285 residues: HTH-type transcriptional regulator MurR (285 aa).

The 77-residue stretch at 1 to 77 (MLYLTKIRNA…MALIGEYSAS (77 aa)) folds into the HTH rpiR-type domain. A DNA-binding region (H-T-H motif) is located at residues 37–56 (SRQMAKQLGISQSSIVKFAQ). One can recognise an SIS domain in the interval 128–268 (IIEVISKAPF…FVGLVQLNDV (141 aa)).

As to quaternary structure, homotetramer.

It participates in amino-sugar metabolism; N-acetylmuramate degradation [regulation]. Functionally, represses the expression of the murPQ operon involved in the uptake and degradation of N-acetylmuramic acid (MurNAc). Binds to two adjacent inverted repeats within the operator region. MurNAc 6-phosphate, the substrate of MurQ, is the specific inducer that weakens binding of MurR to the operator. This chain is HTH-type transcriptional regulator MurR, found in Escherichia coli (strain ATCC 8739 / DSM 1576 / NBRC 3972 / NCIMB 8545 / WDCM 00012 / Crooks).